Reading from the N-terminus, the 143-residue chain is Peptide methionine sulfoxide reductase MsrB (143 aa).

Positions 16-139 (DAELRRRLTP…NSAALNFEAK (124 aa)) constitute a MsrB domain. Zn(2+)-binding residues include Cys-55, Cys-58, Cys-104, and Cys-107. Cys-128 (nucleophile) is an active-site residue.

This sequence belongs to the MsrB Met sulfoxide reductase family. Requires Zn(2+) as cofactor.

It carries out the reaction L-methionyl-[protein] + [thioredoxin]-disulfide + H2O = L-methionyl-(R)-S-oxide-[protein] + [thioredoxin]-dithiol. The polypeptide is Peptide methionine sulfoxide reductase MsrB (Burkholderia pseudomallei (strain 1710b)).